The sequence spans 130 residues: Peptide methionine sulfoxide reductase MsrB (130 aa).

Residues 8-130 (LEEWRSMLDP…NSVCLDLVPR (123 aa)) form the MsrB domain. Zn(2+) is bound by residues C47, C50, C96, and C99. The Nucleophile role is filled by C119.

It belongs to the MsrB Met sulfoxide reductase family. Zn(2+) serves as cofactor.

The catalysed reaction is L-methionyl-[protein] + [thioredoxin]-disulfide + H2O = L-methionyl-(R)-S-oxide-[protein] + [thioredoxin]-dithiol. The sequence is that of Peptide methionine sulfoxide reductase MsrB from Pseudomonas fluorescens (strain ATCC BAA-477 / NRRL B-23932 / Pf-5).